The chain runs to 264 residues: Acyl-[acyl-carrier-protein]--UDP-N-acetylglucosamine O-acyltransferase (264 aa).

Belongs to the transferase hexapeptide repeat family. LpxA subfamily. As to quaternary structure, homotrimer.

Its subcellular location is the cytoplasm. It carries out the reaction a (3R)-hydroxyacyl-[ACP] + UDP-N-acetyl-alpha-D-glucosamine = a UDP-3-O-[(3R)-3-hydroxyacyl]-N-acetyl-alpha-D-glucosamine + holo-[ACP]. Its pathway is glycolipid biosynthesis; lipid IV(A) biosynthesis; lipid IV(A) from (3R)-3-hydroxytetradecanoyl-[acyl-carrier-protein] and UDP-N-acetyl-alpha-D-glucosamine: step 1/6. Involved in the biosynthesis of lipid A, a phosphorylated glycolipid that anchors the lipopolysaccharide to the outer membrane of the cell. This is Acyl-[acyl-carrier-protein]--UDP-N-acetylglucosamine O-acyltransferase from Rickettsia typhi (strain ATCC VR-144 / Wilmington).